A 198-amino-acid chain; its full sequence is Recombination protein RecR (198 aa).

The segment at 57-72 (CRQCRTLSEEELCPQC) adopts a C4-type zinc-finger fold. The Toprim domain occupies 80–174 (SLLCVVEGPL…TLSRIAHGVP (95 aa)).

This sequence belongs to the RecR family.

In terms of biological role, may play a role in DNA repair. It seems to be involved in an RecBC-independent recombinational process of DNA repair. It may act with RecF and RecO. The sequence is that of Recombination protein RecR from Pseudomonas aeruginosa (strain LESB58).